The primary structure comprises 502 residues: Polyadenylate-binding protein, cytoplasmic and nuclear (502 aa).

RRM domains follow at residues 14-90 (LTIY…KKDE), 96-176 (GNIF…LYNP), 191-275 (TNCF…KGQR), and 299-376 (KNLY…YFKN).

The protein belongs to the polyadenylate-binding protein type-1 family.

It is found in the cytoplasm. Its subcellular location is the nucleus. Binds the poly(A) tail of mRNA. Appears to be an important mediator of the multiple roles of the poly(A) tail in mRNA biogenesis, stability and translation. This chain is Polyadenylate-binding protein, cytoplasmic and nuclear (PAB1), found in Encephalitozoon cuniculi (strain GB-M1) (Microsporidian parasite).